The sequence spans 121 residues: Large ribosomal subunit protein bL20 (121 aa).

It belongs to the bacterial ribosomal protein bL20 family.

Binds directly to 23S ribosomal RNA and is necessary for the in vitro assembly process of the 50S ribosomal subunit. It is not involved in the protein synthesizing functions of that subunit. This chain is Large ribosomal subunit protein bL20, found in Mycoplasma mycoides subsp. mycoides SC (strain CCUG 32753 / NCTC 10114 / PG1).